We begin with the raw amino-acid sequence, 638 residues long: 1-deoxy-D-xylulose-5-phosphate synthase (638 aa).

Thiamine diphosphate contacts are provided by residues histidine 75 and 116–118 (AHS). Aspartate 147 is a binding site for Mg(2+). Thiamine diphosphate-binding positions include 148-149 (GA), asparagine 177, tyrosine 288, and glutamate 370. Residue asparagine 177 coordinates Mg(2+).

Belongs to the transketolase family. DXPS subfamily. In terms of assembly, homodimer. Requires Mg(2+) as cofactor. The cofactor is thiamine diphosphate.

The catalysed reaction is D-glyceraldehyde 3-phosphate + pyruvate + H(+) = 1-deoxy-D-xylulose 5-phosphate + CO2. Its pathway is metabolic intermediate biosynthesis; 1-deoxy-D-xylulose 5-phosphate biosynthesis; 1-deoxy-D-xylulose 5-phosphate from D-glyceraldehyde 3-phosphate and pyruvate: step 1/1. In terms of biological role, catalyzes the acyloin condensation reaction between C atoms 2 and 3 of pyruvate and glyceraldehyde 3-phosphate to yield 1-deoxy-D-xylulose-5-phosphate (DXP). This Cupriavidus taiwanensis (strain DSM 17343 / BCRC 17206 / CCUG 44338 / CIP 107171 / LMG 19424 / R1) (Ralstonia taiwanensis (strain LMG 19424)) protein is 1-deoxy-D-xylulose-5-phosphate synthase.